The sequence spans 601 residues: Pyranose 2-oxidase (601 aa).

H151 carries the tele-8alpha-FAD histidine modification. Substrate is bound by residues Q406 and H408. The Proton acceptor role is filled by H505. N558 is an active-site residue. Positions 577-601 are disordered; it reads KLGKKGSHSGNRDDGDVDTDTDDDA. Positions 591-601 are enriched in acidic residues; it reads GDVDTDTDDDA.

Belongs to the GMC oxidoreductase family. As to quaternary structure, homotetramer. The cofactor is FAD.

It catalyses the reaction D-glucose + O2 = 2-dehydro-D-glucose + H2O2. Catalyzes the oxidation of various aldopyranoses and disaccharides on carbon-2 to the corresponding 2-keto sugars concomitant with the reduction of O(2) to H(2)O(2). The sequence is that of Pyranose 2-oxidase (p2ox) from Emericella nidulans (strain FGSC A4 / ATCC 38163 / CBS 112.46 / NRRL 194 / M139) (Aspergillus nidulans).